Reading from the N-terminus, the 395-residue chain is Transmembrane protein 79 (395 aa).

A disordered region spans residues 1–115; sequence MTEPETLALL…PPTKLEELPE (115 aa). Topologically, residues 1-204 are cytoplasmic; sequence MTEPETLALL…GREALRAVAS (204 aa). The helical transmembrane segment at 205–225 threads the bilayer; that stretch reads VGAALILFPCLLYGAYAFLPF. The Extracellular segment spans residues 226–244; the sequence is DAPRLPTMSSRLIYTLRCG. A helical transmembrane segment spans residues 245–265; it reads VFATFPIVLGILVYGLSLLCF. The Cytoplasmic segment spans residues 266–290; that stretch reads AALRPFGEPRREVEIHRQYVAQSVQ. The chain crosses the membrane as a helical span at residues 291–311; it reads LFILYFFNLAVLSTYLPQDAL. Topologically, residues 312–313 are extracellular; sequence KL. Residues 314 to 334 traverse the membrane as a helical segment; sequence LPLLTGLFAISRLIYWLTFAV. The Cytoplasmic portion of the chain corresponds to 335–343; sequence GRSFRGFGY. The helical transmembrane segment at 344–364 threads the bilayer; it reads GLTFLPLLSMLLWNFYYMFVV. Over 365 to 395 the chain is Extracellular; it reads EPERMLTASESRLDYPDHARSASDYRPRSRG.

It localises to the lysosome. It is found in the golgi apparatus. Its subcellular location is the trans-Golgi network. The protein resides in the membrane. In terms of biological role, contributes to the epidermal integrity and skin barrier function. Plays a role in the lamellar granule (LG) secretory system and in the stratum corneum (SC) epithelial cell formation. This is Transmembrane protein 79 (TMEM79) from Bos taurus (Bovine).